A 317-amino-acid polypeptide reads, in one-letter code: Protease HtpX homolog (317 aa).

The next 2 membrane-spanning stretches (helical) occupy residues 6-26 and 28-48; these read TAILLAGLTALFMAVGFAIGG and GGMMIAFVVASATNLFSYWNS. His-130 serves as a coordination point for Zn(2+). Glu-131 is a catalytic residue. A Zn(2+)-binding site is contributed by His-134. Helical transmembrane passes span 145–165 and 173–193; these read MTATIAGAISMLANFGLLFGG and PFGAIGTILMVILAPLAAMLV. Glu-202 provides a ligand contact to Zn(2+). The segment at 283-317 is disordered; that stretch reads GGGGFAPGPAPAVRPPGGNPWGVDPGGGQRRGPWG. Positions 290-300 are enriched in pro residues; it reads GPAPAVRPPGG. A compositionally biased stretch (gly residues) spans 306–317; that stretch reads DPGGGQRRGPWG.

It belongs to the peptidase M48B family. The cofactor is Zn(2+).

The protein localises to the cell inner membrane. This is Protease HtpX homolog from Xanthobacter autotrophicus (strain ATCC BAA-1158 / Py2).